Reading from the N-terminus, the 211-residue chain is Glycerol-3-phosphate acyltransferase (211 aa).

The next 5 membrane-spanning stretches (helical) occupy residues 5-25, 58-78, 80-100, 112-132, and 138-158; these read ALGM…ILFC, VLVF…ALGV, PLYL…PVFF, LGAI…TWLL, and GYSS…VWWF.

The protein belongs to the PlsY family. In terms of assembly, probably interacts with PlsX.

The protein localises to the cell inner membrane. It carries out the reaction an acyl phosphate + sn-glycerol 3-phosphate = a 1-acyl-sn-glycero-3-phosphate + phosphate. The protein operates within lipid metabolism; phospholipid metabolism. Functionally, catalyzes the transfer of an acyl group from acyl-phosphate (acyl-PO(4)) to glycerol-3-phosphate (G3P) to form lysophosphatidic acid (LPA). This enzyme utilizes acyl-phosphate as fatty acyl donor, but not acyl-CoA or acyl-ACP. The sequence is that of Glycerol-3-phosphate acyltransferase from Pectobacterium atrosepticum (strain SCRI 1043 / ATCC BAA-672) (Erwinia carotovora subsp. atroseptica).